The sequence spans 586 residues: Putative Lon protease homolog (586 aa).

A Lon proteolytic domain is found at Gly346–Leu543. Active-site residues include Ser438 and Lys481.

Belongs to the peptidase S16 family.

The sequence is that of Putative Lon protease homolog (ycbZ) from Escherichia coli (strain K12).